We begin with the raw amino-acid sequence, 544 residues long: Homeobox protein B-H1 (544 aa).

The segment covering 53–70 (STTTMSSGGSTTTASGIG) has biased composition (low complexity). 4 disordered regions span residues 53–73 (STTT…GKPN), 92–179 (YKQQ…PPTA), 236–308 (GGVG…AFTD), and 471–544 (AANP…QIQV). The span at 95–105 (QQHHQQLHHHN) shows a compositional bias: basic residues. Positions 106–131 (NNNNSGSSGGSSPAHSNNNNNINGDN) are enriched in low complexity. Residues 156–172 (THPHTHPHALMHPHGKL) show a composition bias toward basic residues. The segment covering 247–262 (DLDDSSDYHEENEDCD) has biased composition (acidic residues). Basic and acidic residues predominate over residues 266–282 (MDDHSVCSNGGKDDDGN). The segment covering 283–293 (SVKSGSTSDMS) has biased composition (polar residues). A DNA-binding region (homeobox) is located at residues 299–358 (QRKARTAFTDHQLQTLEKSFERQKYLSVQERQELAHKLDLSDCQVKTWYQNRRTKWKRQT). Pro residues predominate over residues 476–485 (GPHPVAPPPS). The span at 492 to 506 (PSGLVKPIPAHSASA) shows a compositional bias: low complexity. A compositionally biased stretch (pro residues) spans 507–516 (SPPPRPPSTP).

The protein belongs to the Antp homeobox family. In terms of tissue distribution, B-H1 and B-H2 are abundant in the eye-antenna imaginal disk. Expressed in R1 and R6 cells throughout larval stage until 30 hours after puparium formation, at which time expression is seen in the anterior and posterior primary pigment cells. Coexpressed in embryonic glial cells, neurons of the CNS and PNS, most latitudinal anterior cells of the developing notum and the central circular region of the leg and antennal imaginal disk throughout larval development.

It is found in the nucleus. Its function is as follows. B-H1 and B-H2 are regulated by members of the wg signaling pathway; wg and dpp. B-H1 and B-H2 are coexpressed and functionally required in R1 and R6 receptor cells and primary pigment cells for normal eye development. Coexpression is also required for the fate determination of external sensory organs, formation of notal microchaetae, formation of presutural macrochaetae, antennal development and for distal leg morphogenesis; segmentation and specification of tarsal segments 3-5. The sequence is that of Homeobox protein B-H1 (B-H1) from Drosophila melanogaster (Fruit fly).